We begin with the raw amino-acid sequence, 1018 residues long: 2-oxoglutarate dehydrogenase-like, mitochondrial (1018 aa).

3 residues coordinate Ca(2+): H138, D151, and D153. 5 residues coordinate thiamine diphosphate: R307, D406, N439, I441, and Q671. Residues D406, N439, and I441 each coordinate Mg(2+).

This sequence belongs to the alpha-ketoglutarate dehydrogenase family. The OGDHC complex comprises multiple copies of three catalytic enzyme components, the 2-oxoglutarate dehydrogenase (OGDH/E1), the dihydrolipoamide dehydrogenase (DLST/E2) and the dihydrolipoamide dehydrogenase (DLD/E3). OGDHL/E1-like isoenzyme may replace OGDH in the OGDHC complex in the brain. Thiamine diphosphate serves as cofactor. Mg(2+) is required as a cofactor.

The protein localises to the mitochondrion matrix. The catalysed reaction is N(6)-[(R)-lipoyl]-L-lysyl-[protein] + 2-oxoglutarate + H(+) = N(6)-[(R)-S(8)-succinyldihydrolipoyl]-L-lysyl-[protein] + CO2. 2-oxoglutarate dehydrogenase (E1-like) component of the 2-oxoglutarate dehydrogenase multienzyme complex (OGDHC) which mediates the decarboxylation of alpha-ketoglutarate in the tricarboxylic acid cycle. The OGDHC complex catalyzes the overall conversion of 2-oxoglutarate to succinyl-CoA and CO(2) while reducing NAD(+) to NADH. The OGDHC complex is mainly active in the mitochondrion. Involved in the inhibition of cell proliferation and in apoptosis. The polypeptide is 2-oxoglutarate dehydrogenase-like, mitochondrial (ogdhl) (Xenopus laevis (African clawed frog)).